The chain runs to 177 residues: Large ribosomal subunit protein uL6 (177 aa).

This sequence belongs to the universal ribosomal protein uL6 family. As to quaternary structure, part of the 50S ribosomal subunit.

Its function is as follows. This protein binds to the 23S rRNA, and is important in its secondary structure. It is located near the subunit interface in the base of the L7/L12 stalk, and near the tRNA binding site of the peptidyltransferase center. In Laribacter hongkongensis (strain HLHK9), this protein is Large ribosomal subunit protein uL6.